A 493-amino-acid polypeptide reads, in one-letter code: Trigger factor (493 aa).

Residues 162–243 (GDFVSLDLSA…VRGVKEKELP (82 aa)) enclose the PPIase FKBP-type domain. The tract at residues 432–493 (ELALPARPAP…AAVDSGDRDI (62 aa)) is disordered. Over residues 449–470 (HAGHDHEGHDHADHAGHDHAGD) the composition is skewed to basic and acidic residues. Low complexity predominate over residues 474–485 (AEPAEAPAATAA).

Belongs to the FKBP-type PPIase family. Tig subfamily.

It localises to the cytoplasm. It catalyses the reaction [protein]-peptidylproline (omega=180) = [protein]-peptidylproline (omega=0). In terms of biological role, involved in protein export. Acts as a chaperone by maintaining the newly synthesized protein in an open conformation. Functions as a peptidyl-prolyl cis-trans isomerase. In Frankia alni (strain DSM 45986 / CECT 9034 / ACN14a), this protein is Trigger factor.